Reading from the N-terminus, the 389-residue chain is Phospho-N-acetylmuramoyl-pentapeptide-transferase (389 aa).

A run of 10 helical transmembrane segments spans residues 25–45 (RAVMATITALGIGLVCGPWVI), 73–93 (TMGGVLILIGIAVATLLWGDL), 97–117 (FIWIVMLVTFGFGVIGWVDDY), 135–155 (FWQSVIGLFAAVYLAFSVSEA), 190–210 (ISYPLGVWGFIVLTYFVIVGA), 222–242 (GLVIMPVVLVGGSLGVFAYVM), 258–278 (GAGELLIFCSAMGGAGLAFLW), 286–306 (VFMGDVGALALGGALGTVAVI), 311–331 (IVLFIMGGIFVAETLSVMLQV), and 366–386 (QVVVRFWIITLMLCLFGLSTL).

It belongs to the glycosyltransferase 4 family. MraY subfamily. It depends on Mg(2+) as a cofactor.

The protein localises to the cell inner membrane. The catalysed reaction is UDP-N-acetyl-alpha-D-muramoyl-L-alanyl-gamma-D-glutamyl-meso-2,6-diaminopimeloyl-D-alanyl-D-alanine + di-trans,octa-cis-undecaprenyl phosphate = di-trans,octa-cis-undecaprenyl diphospho-N-acetyl-alpha-D-muramoyl-L-alanyl-D-glutamyl-meso-2,6-diaminopimeloyl-D-alanyl-D-alanine + UMP. Its pathway is cell wall biogenesis; peptidoglycan biosynthesis. Catalyzes the initial step of the lipid cycle reactions in the biosynthesis of the cell wall peptidoglycan: transfers peptidoglycan precursor phospho-MurNAc-pentapeptide from UDP-MurNAc-pentapeptide onto the lipid carrier undecaprenyl phosphate, yielding undecaprenyl-pyrophosphoryl-MurNAc-pentapeptide, known as lipid I. This is Phospho-N-acetylmuramoyl-pentapeptide-transferase from Burkholderia ambifaria (strain ATCC BAA-244 / DSM 16087 / CCUG 44356 / LMG 19182 / AMMD) (Burkholderia cepacia (strain AMMD)).